The following is a 266-amino-acid chain: Phosphatidylglycerol--prolipoprotein diacylglyceryl transferase (266 aa).

The next 7 helical transmembrane spans lie at 10 to 30, 56 to 76, 92 to 112, 120 to 140, 171 to 191, 199 to 219, and 233 to 253; these read VALA…LIGI, LVFW…VLFY, WKGG…VWWF, FFQL…AGRI, PSQL…LWLF, ASVS…VEFV, and WLTM…ALMV. Arg139 contributes to the a 1,2-diacyl-sn-glycero-3-phospho-(1'-sn-glycerol) binding site.

This sequence belongs to the Lgt family.

Its subcellular location is the cell inner membrane. The enzyme catalyses L-cysteinyl-[prolipoprotein] + a 1,2-diacyl-sn-glycero-3-phospho-(1'-sn-glycerol) = an S-1,2-diacyl-sn-glyceryl-L-cysteinyl-[prolipoprotein] + sn-glycerol 1-phosphate + H(+). Its pathway is protein modification; lipoprotein biosynthesis (diacylglyceryl transfer). In terms of biological role, catalyzes the transfer of the diacylglyceryl group from phosphatidylglycerol to the sulfhydryl group of the N-terminal cysteine of a prolipoprotein, the first step in the formation of mature lipoproteins. The sequence is that of Phosphatidylglycerol--prolipoprotein diacylglyceryl transferase from Pseudomonas aeruginosa (strain LESB58).